Consider the following 299-residue polypeptide: Foldase protein PrsA (299 aa).

The signal sequence occupies residues 1–19; sequence MKKWTIAASLSIGVLALSA. Cys-20 carries N-palmitoyl cysteine lipidation. A lipid anchor (S-diacylglycerol cysteine) is attached at Cys-20. The PpiC domain occupies 137–227; the sequence is NTEIQAQHIL…HGTHIIKVND (91 aa).

This sequence belongs to the PrsA family.

The protein localises to the cell membrane. The enzyme catalyses [protein]-peptidylproline (omega=180) = [protein]-peptidylproline (omega=0). Its function is as follows. Plays a major role in protein secretion by helping the post-translocational extracellular folding of several secreted proteins. In Oceanobacillus iheyensis (strain DSM 14371 / CIP 107618 / JCM 11309 / KCTC 3954 / HTE831), this protein is Foldase protein PrsA.